A 438-amino-acid polypeptide reads, in one-letter code: MYVFLLFSRYKIFYVYIKKMAHRSRCNCNDTSNSNGSQHGINLPLRKIDTYDPCVNCRVKPHLCPKPHPCPKPENLEADIVIIGAGAAGCVLAYYLTKFSDLKIILLEAGHTHFNDPVVTDPMGFFGKYNPPNENIRMSQNPSYAWQPALEPDTGAYSMRNVVAHGLAVGGSTAINQLNYIVGGRTVFDNDWPTGWKYDDIKKYFRRVLADISPIRDGTKVNLTNTILESMRVLADQQVSSGVPVDFLINKATGGLPNIEQTYQGAPIVNLNDYEGINSVCGFKSYYVGVNQLSDGSYIRKYAGNTYLNSYYVDSNGFGIGKFSNLRVISDAVVDRIHFEGQRAVSVTYIDKKGNLHSVKVHKEVEICSGSFFTPTILQRSGIGDFSYLSSIGVPDLVYNNPLVGQGLRNHYSPITQVSVTGPDAAAFLSNTAAGPTI.

Positions 1–26 (MYVFLLFSRYKIFYVYIKKMAHRSRC) are cleaved as a signal peptide. 79–109 (DIVIIGAGAAGCVLAYYLTKFSDLKIILLEA) contacts FAD.

Belongs to the GMC oxidoreductase family. FAD is required as a cofactor.

The protein resides in the virion. The polypeptide is Putative truncated GMC-type inactive oxidoreductase L894 (Acanthamoeba polyphaga (Amoeba)).